The sequence spans 429 residues: C4-dicarboxylate transport protein (429 aa).

Helical transmembrane passes span 9–29, 45–65, 79–99, 149–169, 185–205, 223–243, 308–328, and 356–376; these read VLYVQVIFAIIVGVILGHFYP, LIKMVIGPIIFCTVVTGIAGM, LLYFEVVSTFALLLGLAATHI, GEILQILLIALLFGSVLAHLG, VLFGIVHIVTKLAPIGAFGAM, LIGTFYLTSIVFVLVVLGTIA, IYMTMAVLFIAQATNIELTWM, and AATLAVVPTIPLSGMVLILGI.

It belongs to the dicarboxylate/amino acid:cation symporter (DAACS) (TC 2.A.23) family.

Its subcellular location is the cell inner membrane. Responsible for the transport of dicarboxylates such as succinate, fumarate, and malate from the periplasm across the membrane. The polypeptide is C4-dicarboxylate transport protein (Burkholderia ambifaria (strain MC40-6)).